A 483-amino-acid polypeptide reads, in one-letter code: Regulatory protein ViaA (483 aa).

This sequence belongs to the ViaA family. In terms of assembly, homodimer. Interacts with RavA.

It localises to the cytoplasm. Functionally, component of the RavA-ViaA chaperone complex, which may act on the membrane to optimize the function of some of the respiratory chains. ViaA stimulates the ATPase activity of RavA. The sequence is that of Regulatory protein ViaA from Escherichia coli O17:K52:H18 (strain UMN026 / ExPEC).